The sequence spans 253 residues: Methionine-R-sulfoxide reductase B3, mitochondrial (253 aa).

The N-terminal stretch at 1 to 56 is a signal peptide; the sequence is MPPAAPSVARSREGGGIGQRRLVFPKSARRTLPCPIALCLGLCLAAAAATTTRASA. Position 102 is an N6-acetyllysine (Lys-102). Residues 107-229 enclose the MsrB domain; that stretch reads QQELRKRLTP…NSASLSFTPA (123 aa). Zn(2+) contacts are provided by Cys-146, Cys-149, Cys-195, and Cys-198. Cys-218 functions as the Nucleophile in the catalytic mechanism. The interval 227-253 is disordered; that stretch reads TPADSSEAEGSGIKESGSPAAADRAEL. Ser-244 carries the post-translational modification Phosphoserine. The short motif at 250–253 is the Endoplasmic reticulum retention signal element; it reads RAEL.

It belongs to the MsrB Met sulfoxide reductase family. As to quaternary structure, monomer. Requires Zn(2+) as cofactor. As to expression, widely expressed. Detected in the sensory epithelia of the organ of Corti and vestibular end organs as early as P2 up to adulthood (at protein level). In the organ of Corti, present in inner and outer hair cells and, to a lesser extent, in supporting cells (at protein level). In hair cells, distributed throughout the cell body. Barely detectable level in stereocilia. Also observed in spiral ganglion neurons, but not in the stria vascularis. In the vestibular end organs, found throughout the sensory epithelium, but more intense expression in hair cells than in supporting cells (at protein level). In vestibular hair cells, present within cell bodies and to a lesser extent in kinocilia. Barely detectable in stereocilia.

The protein resides in the endoplasmic reticulum. It catalyses the reaction L-methionyl-[protein] + [thioredoxin]-disulfide + H2O = L-methionyl-(R)-S-oxide-[protein] + [thioredoxin]-dithiol. The enzyme catalyses [thioredoxin]-disulfide + L-methionine + H2O = L-methionine (R)-S-oxide + [thioredoxin]-dithiol. Functionally, catalyzes the reduction of free and protein-bound methionine sulfoxide to methionine. The chain is Methionine-R-sulfoxide reductase B3, mitochondrial (Msrb3) from Mus musculus (Mouse).